The primary structure comprises 487 residues: Serine/threonine-protein kinase 4 (487 aa).

N-acetylmethionine is present on methionine 1. Threonine 3 carries the phosphothreonine modification. The Protein kinase domain maps to 30–281 (FDVLEKLGEG…ATQLLQHPFV (252 aa)). ATP-binding positions include 36 to 44 (LGEGSYGSV) and lysine 59. Aspartate 149 functions as the Proton acceptor in the catalytic mechanism. Threonine 183 is subject to Phosphothreonine; by autocatalysis. Phosphoserine is present on residues serine 265 and serine 320. The stretch at 289–327 (ILRDLINEAMDVKLKRQEAQQREVDQEEEENSEEDELDS) forms a coiled coil. A disordered region spans residues 305-332 (QEAQQREVDQEEEENSEEDELDSGTMVR). Acidic residues predominate over residues 313 to 326 (DQEEEENSEEDELD). Phosphothreonine occurs at positions 340 and 367. Position 387 is a phosphothreonine; by PKB/AKT1 (threonine 387). 2 positions are modified to phosphoserine: serine 410 and serine 414. At tyrosine 433 the chain carries Phosphotyrosine. Residues 433 to 480 (YEFLKSWTVEDLQKRLLALDPMMEQEIEEIRQKYQSKRQPILDAIEAK) form the SARAH domain.

This sequence belongs to the protein kinase superfamily. STE Ser/Thr protein kinase family. STE20 subfamily. As to quaternary structure, homodimer; mediated via the coiled-coil region. Interacts with NORE1, which inhibits autoactivation. Interacts with and stabilizes SAV1. Interacts with RASSF1. Interacts with FOXO3. Interacts with RASSF2 (via SARAH domain). Interacts with AR, PKB/AKT1, TNNI3 and SIRT1. Interacts with DLG5 (via PDZ domain 3). Interacts with MARK3 and SCRIB in the presence of DLG5. Mg(2+) is required as a cofactor. Post-translationally, autophosphorylated on serine and threonine residues. Phosphorylation at Thr-387 by PKB/AKT1, leads to inhibition of its: kinase activity, nuclear translocation and autophosphorylation at Thr-183. It also diminishes its cleavage by caspases and its ability to phosphorylate FOXO3. Proteolytically cleaved by caspase-3 during apoptosis at Asp-326 and Asp-349 resulting in a 37 kDa or a 39 kDa subunit respectively. The 39 kDa subunit is further cleaved into the 37 kDa form. Proteolytic cleavage results in kinase activation and nuclear translocation of the truncated form (MST1/N). It is less likely that cleavage at Asp-349 is a prerequisite for activation as this site is not conserved in the murine ortholog.

The protein resides in the cytoplasm. Its subcellular location is the nucleus. The catalysed reaction is L-seryl-[protein] + ATP = O-phospho-L-seryl-[protein] + ADP + H(+). It catalyses the reaction L-threonyl-[protein] + ATP = O-phospho-L-threonyl-[protein] + ADP + H(+). Its activity is regulated as follows. Inhibited by the C-terminal non-catalytic region. Activated by caspase-cleavage. Full activation also requires homodimerization and autophosphorylation of Thr-183. Activated by RASSF1 which acts by preventing its dephosphorylation. Stress-activated, pro-apoptotic kinase which, following caspase-cleavage, enters the nucleus and induces chromatin condensation followed by internucleosomal DNA fragmentation. Key component of the Hippo signaling pathway which plays a pivotal role in organ size control and tumor suppression by restricting proliferation and promoting apoptosis. The core of this pathway is composed of a kinase cascade wherein STK3/MST2 and STK4/MST1, in complex with its regulatory protein SAV1, phosphorylates and activates LATS1/2 in complex with its regulatory protein MOB1, which in turn phosphorylates and inactivates YAP1 oncoprotein and WWTR1/TAZ. Phosphorylation of YAP1 by LATS2 inhibits its translocation into the nucleus to regulate cellular genes important for cell proliferation, cell death, and cell migration. STK3/MST2 and STK4/MST1 are required to repress proliferation of mature hepatocytes, to prevent activation of facultative adult liver stem cells (oval cells), and to inhibit tumor formation. Phosphorylates 'Ser-14' of histone H2B (H2BS14ph) during apoptosis. Phosphorylates FOXO3 upon oxidative stress, which results in its nuclear translocation and cell death initiation. Phosphorylates MOBKL1A, MOBKL1B and RASSF2. Phosphorylates TNNI3 (cardiac Tn-I) and alters its binding affinity to TNNC1 (cardiac Tn-C) and TNNT2 (cardiac Tn-T). Phosphorylates FOXO1 on 'Ser-212' and regulates its activation and stimulates transcription of PMAIP1 in a FOXO1-dependent manner. Phosphorylates SIRT1 and inhibits SIRT1-mediated p53/TP53 deacetylation, thereby promoting p53/TP53 dependent transcription and apoptosis upon DNA damage. Acts as an inhibitor of PKB/AKT1. Phosphorylates AR on 'Ser-650' and suppresses its activity by intersecting with PKB/AKT1 signaling and antagonizing formation of AR-chromatin complexes. In Bos taurus (Bovine), this protein is Serine/threonine-protein kinase 4 (STK4).